The primary structure comprises 429 residues: Histidine--tRNA ligase (429 aa).

Belongs to the class-II aminoacyl-tRNA synthetase family. As to quaternary structure, homodimer.

It is found in the cytoplasm. The enzyme catalyses tRNA(His) + L-histidine + ATP = L-histidyl-tRNA(His) + AMP + diphosphate + H(+). The chain is Histidine--tRNA ligase from Pseudomonas syringae pv. tomato (strain ATCC BAA-871 / DC3000).